The primary structure comprises 462 residues: Siroheme synthase (462 aa).

The tract at residues 1-203 is precorrin-2 dehydrogenase /sirohydrochlorin ferrochelatase; it reads MEYLPLFANL…GKWEHAEKEI (203 aa). Residues 22–23 and 43–44 each bind NAD(+); these read NV and DD. Phosphoserine is present on Ser128. A uroporphyrinogen-III C-methyltransferase region spans residues 215-462; the sequence is GNVALVGAGP…NWFGKIIKEQ (248 aa). Residue Pro224 participates in S-adenosyl-L-methionine binding. Asp247 acts as the Proton acceptor in catalysis. The Proton donor role is filled by Lys269. S-adenosyl-L-methionine-binding positions include 300 to 302, Ile305, 330 to 331, Met383, and Gly412; these read GGD and TA.

In the N-terminal section; belongs to the precorrin-2 dehydrogenase / sirohydrochlorin ferrochelatase family. This sequence in the C-terminal section; belongs to the precorrin methyltransferase family.

It carries out the reaction uroporphyrinogen III + 2 S-adenosyl-L-methionine = precorrin-2 + 2 S-adenosyl-L-homocysteine + H(+). The enzyme catalyses precorrin-2 + NAD(+) = sirohydrochlorin + NADH + 2 H(+). The catalysed reaction is siroheme + 2 H(+) = sirohydrochlorin + Fe(2+). It participates in cofactor biosynthesis; adenosylcobalamin biosynthesis; precorrin-2 from uroporphyrinogen III: step 1/1. The protein operates within cofactor biosynthesis; adenosylcobalamin biosynthesis; sirohydrochlorin from precorrin-2: step 1/1. Its pathway is porphyrin-containing compound metabolism; siroheme biosynthesis; precorrin-2 from uroporphyrinogen III: step 1/1. It functions in the pathway porphyrin-containing compound metabolism; siroheme biosynthesis; siroheme from sirohydrochlorin: step 1/1. It participates in porphyrin-containing compound metabolism; siroheme biosynthesis; sirohydrochlorin from precorrin-2: step 1/1. Functionally, multifunctional enzyme that catalyzes the SAM-dependent methylations of uroporphyrinogen III at position C-2 and C-7 to form precorrin-2 via precorrin-1. Then it catalyzes the NAD-dependent ring dehydrogenation of precorrin-2 to yield sirohydrochlorin. Finally, it catalyzes the ferrochelation of sirohydrochlorin to yield siroheme. The protein is Siroheme synthase of Baumannia cicadellinicola subsp. Homalodisca coagulata.